The primary structure comprises 244 residues: MVRVTLVNYTKRPLETITWAALISYWGEWSTESFERISENDVEKHLPRILGYGHESILEHATFTFSIEGCSRVCTHQLVRHRIASYTQQSQRYIVLDEENVEETFVIPESIKKDRELYEKWKKVMAETISLYKESINRGVHQEDARFILPQAVKTKIIVTMNLRELKHFFGLRLCERAQWEIREVAWKMLEEMAKRDDIRPIIKWAKLGPRCIQFGYCPERDLMPPGCLKKTRKKWEKVAESKS.

The ThyX domain maps to 2 to 207 (VRVTLVNYTK…DIRPIIKWAK (206 aa)). Residues serine 56, 80-82 (RHR), and glutamine 88 each bind FAD. Residues 77–80 (QLVR), 88–92 (QQSQR), and arginine 146 each bind dUMP. Residues 80–90 (RHRIASYTQQS) carry the ThyX motif motif. Residues 162–164 (NLR) and histidine 168 contribute to the FAD site. DUMP is bound at residue arginine 173. The active-site Involved in ionization of N3 of dUMP, leading to its activation is arginine 173.

This sequence belongs to the thymidylate synthase ThyX family. Homotetramer. Requires FAD as cofactor.

The catalysed reaction is dUMP + (6R)-5,10-methylene-5,6,7,8-tetrahydrofolate + NADPH + H(+) = dTMP + (6S)-5,6,7,8-tetrahydrofolate + NADP(+). Its pathway is pyrimidine metabolism; dTTP biosynthesis. Its function is as follows. Catalyzes the reductive methylation of 2'-deoxyuridine-5'-monophosphate (dUMP) to 2'-deoxythymidine-5'-monophosphate (dTMP) while utilizing 5,10-methylenetetrahydrofolate (mTHF) as the methyl donor, and NADPH and FADH(2) as the reductant. The protein is Flavin-dependent thymidylate synthase of Pyrococcus furiosus (strain ATCC 43587 / DSM 3638 / JCM 8422 / Vc1).